The sequence spans 395 residues: Zinc finger protein HD1 (395 aa).

Residues 30-72 (PWARPCDGCRAAPSVVYCRADAAYLCASCDARVHAANRVASRH) form a B box-type 1; atypical zinc finger. Residues Cys35, Cys38, Cys58, His63, Cys78, Cys81, Cys101, and His106 each contribute to the Zn(2+) site. A B box-type 2; atypical zinc finger spans residues 73–117 (ERVRVCEACERAPAALACRADAAALCVACDVQVHSANPLPAITIP). Disordered stretches follow at residues 147-176 (SKDS…SNNG) and 208-228 (GMHE…EFAE). Low complexity predominate over residues 152–175 (NNNNNNNNNDNDNNDNNNSNSSNN). Residues 326 to 368 (REARVLRYREKKKARKFEKTIRYETRKAYAEARPRIKGRFAKR) enclose the CCT domain.

Belongs to the CONSTANS family. As to quaternary structure, interacts with HAL3 in the dark. In terms of processing, phosphorylated by OSK4 in the presence of HDR1.

Its subcellular location is the nucleus. Functionally, probable transcription factor involved in the regulation of flower development. Required for the promotion of flowering under short day (SD) conditions and the suppression of flowering under long day (LD) conditions. Positively regulates the floral activator HEADING DATE 3a (HD3A) under SD and negatively under LD conditions. The chain is Zinc finger protein HD1 from Oryza sativa subsp. japonica (Rice).